We begin with the raw amino-acid sequence, 731 residues long: NADH-ubiquinone oxidoreductase 75 kDa subunit, mitochondrial (731 aa).

The transit peptide at 1 to 27 (MIRAPLVKALGALGSPTHQMASRAVRT) directs the protein to the mitochondrion. The 79-residue stretch at 40-118 (EKIEVFVDDI…GWRIKTNSDL (79 aa)) folds into the 2Fe-2S ferredoxin-type domain. 4 residues coordinate [2Fe-2S] cluster: cysteine 74, cysteine 85, cysteine 88, and cysteine 102. The 4Fe-4S His(Cys)3-ligated-type domain occupies 118-157 (LTRKAREGVMEFLLMNHPLDCPICDQGGECDLQDQAMAFG). [4Fe-4S] cluster-binding residues include histidine 134, cysteine 138, cysteine 141, cysteine 147, cysteine 190, cysteine 193, cysteine 196, and cysteine 240. The 4Fe-4S Mo/W bis-MGD-type domain occupies 259 to 315 (IRKVSSIDVLDAVGSNIVVSTRTNEVLRILPRENEDVNEEWLADKSRFACDGLKRQR).

This sequence belongs to the complex I 75 kDa subunit family. In terms of assembly, complex I is composed of about 45 different subunits. The cofactor is [2Fe-2S] cluster. [4Fe-4S] cluster is required as a cofactor.

The protein localises to the mitochondrion inner membrane. The enzyme catalyses a ubiquinone + NADH + 5 H(+)(in) = a ubiquinol + NAD(+) + 4 H(+)(out). Functionally, core subunit of the mitochondrial membrane respiratory chain NADH dehydrogenase (Complex I) that is believed to belong to the minimal assembly required for catalysis. Complex I functions in the transfer of electrons from NADH to the respiratory chain. The immediate electron acceptor for the enzyme is believed to be ubiquinone. This is the largest subunit of complex I and it is a component of the iron-sulfur (IP) fragment of the enzyme. It may form part of the active site crevice where NADH is oxidized. In Drosophila melanogaster (Fruit fly), this protein is NADH-ubiquinone oxidoreductase 75 kDa subunit, mitochondrial.